Consider the following 162-residue polypeptide: Protein archease (162 aa).

Positions 34, 161, and 162 each coordinate Ca(2+).

Belongs to the archease family. In terms of assembly, component of the tRNA-splicing ligase complex.

Its function is as follows. Component of the tRNA-splicing ligase complex required to facilitate the enzymatic turnover of catalytic subunit RTCB. Together with ddx1, acts by facilitating the guanylylation of RTCB, a key intermediate step in tRNA ligation. The polypeptide is Protein archease (zbtb8os) (Danio rerio (Zebrafish)).